The following is a 274-amino-acid chain: Dermonecrotic toxin SdSicTox-betaIIB1bxiii (274 aa).

Residue His-5 is part of the active site. Positions 25 and 27 each coordinate Mg(2+). His-41 acts as the Nucleophile in catalysis. Cystine bridges form between Cys-45–Cys-51 and Cys-47–Cys-190. Asp-85 is a Mg(2+) binding site.

This sequence belongs to the arthropod phospholipase D family. Class II subfamily. Mg(2+) serves as cofactor. Expressed by the venom gland.

It localises to the secreted. The catalysed reaction is an N-(acyl)-sphingosylphosphocholine = an N-(acyl)-sphingosyl-1,3-cyclic phosphate + choline. It carries out the reaction an N-(acyl)-sphingosylphosphoethanolamine = an N-(acyl)-sphingosyl-1,3-cyclic phosphate + ethanolamine. The enzyme catalyses a 1-acyl-sn-glycero-3-phosphocholine = a 1-acyl-sn-glycero-2,3-cyclic phosphate + choline. It catalyses the reaction a 1-acyl-sn-glycero-3-phosphoethanolamine = a 1-acyl-sn-glycero-2,3-cyclic phosphate + ethanolamine. Functionally, dermonecrotic toxins cleave the phosphodiester linkage between the phosphate and headgroup of certain phospholipids (sphingolipid and lysolipid substrates), forming an alcohol (often choline) and a cyclic phosphate. This toxin acts on sphingomyelin (SM). It may also act on ceramide phosphoethanolamine (CPE), lysophosphatidylcholine (LPC) and lysophosphatidylethanolamine (LPE), but not on lysophosphatidylserine (LPS), and lysophosphatidylglycerol (LPG). It acts by transphosphatidylation, releasing exclusively cyclic phosphate products as second products. Induces dermonecrosis, hemolysis, increased vascular permeability, edema, inflammatory response, and platelet aggregation. The sequence is that of Dermonecrotic toxin SdSicTox-betaIIB1bxiii from Sicarius cf. damarensis (strain GJB-2008) (Six-eyed sand spider).